The sequence spans 383 residues: Homoserine O-succinyltransferase (383 aa).

Residues 51–360 (NAILLCHALS…EAEHGHDSFL (310 aa)) form the AB hydrolase-1 domain. The active-site Nucleophile is Ser157. Arg227 is a binding site for substrate. Active-site residues include Asp323 and His356. Asp357 provides a ligand contact to substrate.

This sequence belongs to the AB hydrolase superfamily. MetX family. Homodimer.

The protein resides in the cytoplasm. The enzyme catalyses L-homoserine + succinyl-CoA = O-succinyl-L-homoserine + CoA. It functions in the pathway amino-acid biosynthesis; L-methionine biosynthesis via de novo pathway; O-succinyl-L-homoserine from L-homoserine: step 1/1. Its function is as follows. Transfers a succinyl group from succinyl-CoA to L-homoserine, forming succinyl-L-homoserine. The sequence is that of Homoserine O-succinyltransferase from Acidithiobacillus ferrooxidans (strain ATCC 23270 / DSM 14882 / CIP 104768 / NCIMB 8455) (Ferrobacillus ferrooxidans (strain ATCC 23270)).